A 140-amino-acid polypeptide reads, in one-letter code: Putative pre-16S rRNA nuclease (140 aa).

The protein belongs to the YqgF nuclease family.

The protein resides in the cytoplasm. In terms of biological role, could be a nuclease involved in processing of the 5'-end of pre-16S rRNA. In Lachnospira eligens (strain ATCC 27750 / DSM 3376 / VPI C15-48 / C15-B4) (Eubacterium eligens), this protein is Putative pre-16S rRNA nuclease.